Consider the following 165-residue polypeptide: Protein SprT (165 aa).

One can recognise a SprT-like domain in the interval 10-157 (EACYRQAEDF…YCRRCKATLV (148 aa)). H69 lines the Zn(2+) pocket. The active site involves E70. Position 73 (H73) interacts with Zn(2+).

It belongs to the SprT family. Requires Zn(2+) as cofactor.

The protein resides in the cytoplasm. In Pseudomonas paraeruginosa (strain DSM 24068 / PA7) (Pseudomonas aeruginosa (strain PA7)), this protein is Protein SprT.